The chain runs to 77 residues: MVKFTTFLCIIALLLCSTLTHASARLNPTSVYPEENSFKKLEQGEVICEGVGEEECFLIRRTLVAHTDYIYTQNHNP.

A signal peptide spans 1-24 (MVKFTTFLCIIALLLCSTLTHASA). Residues 25-68 (RLNPTSVYPEENSFKKLEQGEVICEGVGEEECFLIRRTLVAHTD) constitute a propeptide that is removed on maturation. Sulfotyrosine is present on residues Y69 and Y71. The propeptide occupies 74-77 (NHNP).

Belongs to the phytosulfokine family. Post-translationally, sulfation is important for activity and for the binding to a putative membrane receptor. PSK-beta is an enzymatic derivative of PSK-alpha. As to expression, expressed in stems, roots, mature leaves and flowers. Most abundant in vascular bundles.

It localises to the secreted. Its function is as follows. Promotes plant cell differentiation, organogenesis and somatic embryogenesis as well as cell proliferation. May be involved in the low quiescent center cell proliferation. The protein is Phytosulfokines 5 (PSK5) of Arabidopsis thaliana (Mouse-ear cress).